The following is a 603-amino-acid chain: Glutathione-regulated potassium-efflux system protein KefB (603 aa).

13 consecutive transmembrane segments (helical) span residues 5–25 (ALLT…PIAA), 29–49 (IGAV…GLGF), 53–73 (VEAI…IIGL), 87–107 (IFGV…GALY), 115–135 (SALI…LQLM), 152–172 (VLLF…ILAG), 180–202 (WERI…YLVR), 207–227 (FIAA…LVLG), 230–250 (LFME…GILL), 268–288 (GLLL…GILY), 291–311 (IVKI…VLYF), 326–346 (FAGV…AAAS), and 356–376 (PLLL…MQVI). In terms of domain architecture, RCK N-terminal spans 400–521 (EPQVIVVGFG…VRHFSRETFS (122 aa)).

Belongs to the monovalent cation:proton antiporter 2 (CPA2) transporter (TC 2.A.37) family. KefB subfamily. Interacts with the regulatory subunit KefG.

The protein localises to the cell inner membrane. Pore-forming subunit of a potassium efflux system that confers protection against electrophiles. Catalyzes K(+)/H(+) antiport. The protein is Glutathione-regulated potassium-efflux system protein KefB of Pectobacterium atrosepticum (strain SCRI 1043 / ATCC BAA-672) (Erwinia carotovora subsp. atroseptica).